The primary structure comprises 156 residues: Keratin-associated protein 13-4 (156 aa).

4 repeat units span residues 37–46 (CQLGSSLYRN), 47–56 (CQKTCWEPTS), 57–66 (CRKSCYRRRT), and 73–82 (CQTTCSRSLG). The segment at 37–82 (CQLGSSLYRNCQKTCWEPTSCRKSCYRRRTSMLCSPCQTTCSRSLG) is 4 X 10 AA approximate repeats.

It belongs to the PMG family. As to quaternary structure, interacts with hair keratins.

In the hair cortex, hair keratin intermediate filaments are embedded in an interfilamentous matrix, consisting of hair keratin-associated proteins (KRTAP), which are essential for the formation of a rigid and resistant hair shaft through their extensive disulfide bond cross-linking with abundant cysteine residues of hair keratins. The matrix proteins include the high-sulfur and high-glycine-tyrosine keratins. The protein is Keratin-associated protein 13-4 (KRTAP13-4) of Macaca fascicularis (Crab-eating macaque).